A 507-amino-acid chain; its full sequence is Carnosic acid synthase (507 aa).

Residues 6–23 (VFSLAFLAAWFIVVFPRW) traverse the membrane as a helical segment. Heme is bound at residue Cys-450.

This sequence belongs to the cytochrome P450 family. Requires heme as cofactor. As to expression, expressed in glandular trichomes of young leaves.

It localises to the membrane. It catalyses the reaction 11-hydroxyferruginol + 3 reduced [NADPH--hemoprotein reductase] + 3 O2 = carnosate + 3 oxidized [NADPH--hemoprotein reductase] + 4 H2O + 4 H(+). The enzyme catalyses miltiradiene + 2 reduced [NADPH--hemoprotein reductase] + 2 O2 = miltiradien-20-al + 2 oxidized [NADPH--hemoprotein reductase] + 3 H2O + 2 H(+). It carries out the reaction ferruginol + 3 reduced [NADPH--hemoprotein reductase] + 3 O2 = pisiferate + 3 oxidized [NADPH--hemoprotein reductase] + 4 H2O + 4 H(+). Its pathway is secondary metabolite biosynthesis; terpenoid biosynthesis. In terms of biological role, monooxygenase involved in the biosynthesis of carnosate, a potent antioxidant labdane-related diterpene natural product. Catalyzes the oxidation of 11-hydroxyferruginol to produce carnosate. Mediates the conversion of miltiradien into miltiradien-20-al. Also involved in the production of pisiferic acid and derivative products from ferruginol. The protein is Carnosic acid synthase of Rosmarinus officinalis (Rosemary).